The following is a 450-amino-acid chain: Asparagine--tRNA ligase (450 aa).

The protein belongs to the class-II aminoacyl-tRNA synthetase family. As to quaternary structure, homodimer.

The protein resides in the cytoplasm. It catalyses the reaction tRNA(Asn) + L-asparagine + ATP = L-asparaginyl-tRNA(Asn) + AMP + diphosphate + H(+). The sequence is that of Asparagine--tRNA ligase from Enterococcus faecalis (strain ATCC 700802 / V583).